The following is a 546-amino-acid chain: Chaperonin GroEL (546 aa).

Residues 30-33 (TLGP), Lys-51, 87-91 (DGTTT), Gly-415, and Asp-495 each bind ATP.

This sequence belongs to the chaperonin (HSP60) family. Forms a cylinder of 14 subunits composed of two heptameric rings stacked back-to-back. Interacts with the co-chaperonin GroES.

Its subcellular location is the cytoplasm. It catalyses the reaction ATP + H2O + a folded polypeptide = ADP + phosphate + an unfolded polypeptide.. Together with its co-chaperonin GroES, plays an essential role in assisting protein folding. The GroEL-GroES system forms a nano-cage that allows encapsulation of the non-native substrate proteins and provides a physical environment optimized to promote and accelerate protein folding. This chain is Chaperonin GroEL, found in Brucella ovis (strain ATCC 25840 / 63/290 / NCTC 10512).